The following is a 189-amino-acid chain: Inosine triphosphate pyrophosphatase (189 aa).

14–19 (TGNQNK) contacts ITP. Glutamate 42 is a binding site for Mg(2+). Residues lysine 54, 70–71 (DT), lysine 87, 146–149 (FGWD), lysine 167, and 172–173 (HR) each bind ITP.

The protein belongs to the HAM1 NTPase family. Homodimer. The cofactor is Mg(2+). Mn(2+) is required as a cofactor.

The protein localises to the cytoplasm. It is found in the nucleus. It carries out the reaction ITP + H2O = IMP + diphosphate + H(+). The enzyme catalyses dITP + H2O = dIMP + diphosphate + H(+). It catalyses the reaction XTP + H2O = XMP + diphosphate + H(+). In terms of biological role, pyrophosphatase that hydrolyzes non-canonical purine nucleotides such as inosine triphosphate (ITP), deoxyinosine triphosphate (dITP) or xanthosine 5'-triphosphate (XTP) to their respective monophosphate derivatives. The enzyme does not distinguish between the deoxy- and ribose forms. Probably excludes non-canonical purines from RNA and DNA precursor pools, thus preventing their incorporation into RNA and DNA and avoiding chromosomal lesions. This is Inosine triphosphate pyrophosphatase from Pyricularia oryzae (strain 70-15 / ATCC MYA-4617 / FGSC 8958) (Rice blast fungus).